A 70-amino-acid chain; its full sequence is Conotoxin Cl9.1 (70 aa).

The signal sequence occupies residues 1–20 (MMGKLGVVLFICLVLFPLET). A propeptide spanning residues 21 to 50 (LQLEGGQQADRHVDQLEGNPNRETRTIEVR) is cleaved from the precursor. 3 disulfide bridges follow: Cys51–Cys63, Cys56–Cys67, and Cys61–Cys70.

It belongs to the conotoxin M superfamily. Expressed by the venom duct.

It localises to the secreted. The polypeptide is Conotoxin Cl9.1 (Californiconus californicus (California cone)).